A 284-amino-acid chain; its full sequence is uncharacterized protein (284 aa).

Polar residues predominate over residues 1-27; it reads MSNLPTSTPVSPSNLAEENPKSNNPES. Disordered stretches follow at residues 1–29 and 248–284; these read MSNL…ESSE and TRDS…LKKK.

This is an uncharacterized protein from Caenorhabditis elegans.